The sequence spans 108 residues: UPF0145 protein Ava_0420 (108 aa).

This sequence belongs to the UPF0145 family.

The sequence is that of UPF0145 protein Ava_0420 from Trichormus variabilis (strain ATCC 29413 / PCC 7937) (Anabaena variabilis).